A 451-amino-acid chain; its full sequence is Chromosomal replication initiator protein DnaA (451 aa).

The segment at 1–94 (MKPDLSSLWQ…KPEPKPAQPS (94 aa)) is domain I, interacts with DnaA modulators. The disordered stretch occupies residues 87 to 106 (EPKPAQPSALPTHHNKEENK). Residues 95 to 113 (ALPTHHNKEENKPQTVIRS) form a domain II region. Residues 114–331 (YLNPKHVFEN…GALNRVSANA (218 aa)) are domain III, AAA+ region. The ATP site is built by Gly-159, Gly-161, Lys-162, and Thr-163. Positions 332 to 451 (EFMGAAITID…WSNLIRTLSV (120 aa)) are domain IV, binds dsDNA.

The protein belongs to the DnaA family. As to quaternary structure, oligomerizes as a right-handed, spiral filament on DNA at oriC.

The protein localises to the cytoplasm. Plays an essential role in the initiation and regulation of chromosomal replication. ATP-DnaA binds to the origin of replication (oriC) to initiate formation of the DNA replication initiation complex once per cell cycle. Binds the DnaA box (a 9 base pair repeat at the origin) and separates the double-stranded (ds)DNA. Forms a right-handed helical filament on oriC DNA; dsDNA binds to the exterior of the filament while single-stranded (ss)DNA is stabiized in the filament's interior. The ATP-DnaA-oriC complex binds and stabilizes one strand of the AT-rich DNA unwinding element (DUE), permitting loading of DNA polymerase. After initiation quickly degrades to an ADP-DnaA complex that is not apt for DNA replication. Binds acidic phospholipids. This Pasteurella multocida (strain Pm70) protein is Chromosomal replication initiator protein DnaA.